Here is a 139-residue protein sequence, read N- to C-terminus: Cytochrome c2 (139 aa).

A signal peptide spans 1-25; that stretch reads MVKKLLTILSIAATAGSLSIGTASA. Residue Gln-26 is modified to Pyrrolidone carboxylic acid. Residues Cys-38, Cys-41, His-42, and Met-118 each contribute to the heme c site.

It belongs to the cytochrome c family. Binds 1 heme c group covalently per subunit.

Its function is as follows. Cytochrome c2 is found mainly in purple, non-sulfur, photosynthetic bacteria where it functions as the electron donor to the oxidized bacteriochlorophyll in the photophosphorylation pathway. However, it may also have a role in the respiratory chain and is found in some non-photosynthetic bacteria. The sequence is that of Cytochrome c2 (cycA) from Rhodopseudomonas palustris (strain ATCC BAA-98 / CGA009).